The chain runs to 181 residues: Transcription factor bHLH167 (181 aa).

Residues M1–R22 form a disordered region. The bHLH domain occupies S14–L63.

The protein belongs to the bHLH protein family.

The protein resides in the nucleus. This chain is Transcription factor bHLH167, found in Arabidopsis thaliana (Mouse-ear cress).